Consider the following 618-residue polypeptide: Ubiquitin carboxyl-terminal hydrolase 2 (618 aa).

The tract at residues 1 to 213 is necessary for interaction with MDM4; sequence MSQLSSTLKR…RSEYLTDYLE (213 aa). Disordered regions lie at residues 54–112 and 246–274; these read VSPT…GGSG and RYTLWEKNKGQASGPSRSTSPGRDTMNSK. Over residues 90–100 the composition is skewed to basic and acidic residues; that stretch reads KRSESQTRGNE. Residues 255-274 are compositionally biased toward polar residues; sequence GQASGPSRSTSPGRDTMNSK. The USP domain maps to 280–612; sequence AGLRNLGNTC…DAYLLFYELA (333 aa). The Nucleophile role is filled by cysteine 289. The interval 416 to 516 is necessary for interaction with MDM4; sequence YLEREDSRIG…FPKILVLHLK (101 aa). Residues cysteine 438, cysteine 441, cysteine 489, and cysteine 492 each contribute to the Zn(2+) site. Histidine 570 functions as the Proton acceptor in the catalytic mechanism.

It belongs to the peptidase C19 family. USP2 subfamily. Homooligomer. Found in trimeric complex with MDM2 and MDM4 and USP2. Interacts with CCND1; the interaction is direct and promotes its stabilization by antagonizing ubiquitin-dependent degradation. Interacts (via N-terminus and C-terminus) with MDM2. Interacts with MDM4. Interacts with PER1. Interacts with KCNQ1; counteracts the NEDD4L-specific down-regulation of I(Ks) and restores plasma membrane localization of KCNQ1. Isoform 4: Interacts with NHERF4 and CLTC. Expressed in mesangial cells of the kidney. Isoform 1 and isoform 2 are expressed in elongated spermatids; the shorter form appearing earlier than the longer form (at protein level). Isoform 1 and isoform 2 are expressed in early round spermatids of the testis. Isoform 1 is expressed in muscle and heart. Isoform 2 is expressed in muscle, lung, heart, brain, liver and ovary. During muscle differentiation, isoform 1 expression increases before the onset of membrane fusion and decreases as the myogenic processes proceeded; un counterpart, isoform 2 expression remains low until the burst of membrane fusion but increases thereafter.

The protein resides in the cytoplasm. Its subcellular location is the perinuclear region. It localises to the nucleus. It is found in the membrane. The catalysed reaction is Thiol-dependent hydrolysis of ester, thioester, amide, peptide and isopeptide bonds formed by the C-terminal Gly of ubiquitin (a 76-residue protein attached to proteins as an intracellular targeting signal).. Its activity is regulated as follows. Cleavage is inhibited by ubiquitin in a dosage-dependent manner. Cleavage is blocked by ubiquitin aldehyde. In terms of biological role, hydrolase that deubiquitinates polyubiquitinated target proteins such as MDM2, MDM4 and CCND1. Isoform 1 and isoform 2 possess both ubiquitin-specific peptidase and isopeptidase activities. Deubiquitinates MDM2 without reversing MDM2-mediated p53/TP53 ubiquitination and thus indirectly promotes p53/TP53 degradation and limits p53 activity. Has no deubiquitinase activity against p53/TP53. Prevents MDM2-mediated degradation of MDM4. Plays a role in the G1/S cell-cycle progression in normal and cancer cells. Regulates the circadian clock by modulating its intrinsic circadian rhythm and its capacity to respond to external cues. Associates with clock proteins and deubiquitinates core clock component PER1 but does not affect its overall stability. Regulates the nucleocytoplasmic shuttling and nuclear retention of PER1 and its repressive role on the clock transcription factors CLOCK and BMAL1. Plays a role in the regulation of myogenic differentiation of embryonic muscle cells. Functionally, circadian clock output effector that regulates Ca(2+) absorption in the small intestine. Probably functions by regulating protein levels of the membrane scaffold protein NHERF4 in a rhythmic manner, and is therefore likely to control Ca(2+) membrane permeability mediated by the Ca(2+) channel TRPV6 in the intestine. In Rattus norvegicus (Rat), this protein is Ubiquitin carboxyl-terminal hydrolase 2 (Usp2).